The chain runs to 2376 residues: MPIFYESSSDASDAAPEFDLRNACQRIVTDDEYVVSSSTEPPLSQQLEPIAVVGMGCRLPGDVSSPSDFWRLMMEKRSGQTPKVPSSRFNIDAHFHPDNDRPGSFHVYGGYFINETLQEFDPAFFGITPVEATWMDPQQRKLLEVVYEAFESAGLTLDQLSGSDTACFMATFTADFQQMSFKEPSFRHSLAATGVDPGLLSNRVSHVFNLRGPSIVVNTACSSSVYALHNACNALRNHECSAAVVGGSNLILTVDQHMNTAKLGVLSPTSTCHTFNSYANGYGRAEGVGAIYLKRLSDAVKDGDPIRGVIRSSATNNNGRAPAVGITYPGFDGQRNVMMHAYQRSGLDPMLTGYFECHGTGTAIGDPLEVHAVSDVMNANRTEADGPLQMGAVKTNIGHSEAASGLSAVIKAILIAERNIIPPTRGLTDPNPKIDWKGWQINVPTESMTIPKHLPITRISVNSFGYGGTNAHTIIESPNSLLAFPQSYQYSMPGTTTKSKLARGAVKRNRPYLLVFSAHEIGALKRNATAYGRVAANYSLLDLSYTLANHRTRFHSKGMVVTTPASLHEDIVNGSPNLVLAHKKETATTLGFVFTGQGAQWARMGAQLMAYYPTFLTSIRRMDLALEDLNDAPSWTLEEVILQDSATSCVGEAEFSQPLCTAIQVALVQLFRLWGIQPSVTIGHSSGEIGAAFAAGYISEAEAIWIAYYRGQVVKNIDSVGAMMAVGLGAEAVAPYVESYEPEVVIACHNSPSGVTLSGSVEILKSIEGTLQAEGIFARLVKTNGKAYHSRHMLPAVERYESLIGKARQATTQKHVSSKTKMVSSVTNSVLADDAVLDEKYWSANLVSPVLFNQAVQTALKCKEVPEVDILIEIGPHSALSGPLRQIKTYLHADKLQYLPTLVRGFPCANQVLKLAGELFLRNYPLDLARVTAIEEVYPSGKIIPRMGNLIVDLPPYQWDKTKRYWAESRESKEQRSPRFPRHDVLGQLTTGASLAEPTWRNILRIKDLPWLRDHSLGGEAVFPAAGYLSMAMEAVTQINEMTEKPCKITSYVFRDIVIQQALVTPDDDNGIEVLLNMHPSRINTDDSGKQWWDFNVSSVSIEGHRKNHMAGSIAIRTSARSGLARKVPNLPQRASGRLWNHALKKVGFNYGPTFQDMDNITFDGSTYCAHASTNVKTAVMNDESRHVLHPAIVDSCLQLMIVAIWAGRASAMQFGAVPVRAEEIVIWKPKATHLTEGARATMFSWIDPRGQRLFNAHSQLVAEDRTVLMEIKNMRCIAYEAAIPQKLEAPIQPRPYSQLVYKPDVLWVHNTQTHLDVATFVELAEFKTPGLRVLVTDLMVAQSLIAKFPGIPMTLANRDVKEAEAEADPSGVKKFSLMSLDLTASLATQSYEKLKNSFDVVIAPNILSNSLECIAELLVEGGQAVLGVNGSTIVHDLEKAGLSGPVFSMKDTMFVTSKVRESDKPVSILVQLIYRHNPTEDITRLRLHLEETGFRSRISKLGDPCPPGSNVIMLADLEDPLVATMSEPEFQHLQTLLSDSANVLWVSCGDYLGAGIDPEAAMTLGLLRTLRSERASLKATFVDFVRTDLASEEFLSRTTSLAIALFDDEKKLETEYIARDGQLLLSRLIPAEEVNKTHGKIGRETKPQPFDPKAELVGRIQAGKVVFETALLDKPPLQQDEIEFRQLATGFNLEDQAAITGASFETDFSHETTGIVTKIGSAITKVSVGDKIVAFSASRFSTYQRVAECLVQVLGPEEPYTTIAGLPMYYGAALYGLETLARLQYQESVFILPGSGLLGAAAIWIARALHCLPYVVVRDSAEAEHVATTFSLPSAQILTEYRPEQLVDLDIDVVFSGSSVEPAVAREAWRHTPAFSRFVNCTAAASTSPLDSIPASRGASYLSVNFPRLFQKPRVLGTLLERIMVLYRQGSIPAPSITVRNITELNESIHSFVDSICDNKIVIAHQTSEGLVDIVESRPRLSLPPDATYLLVGCLGGLGRSLTSWMMKHGARNFAFLSRSGMDSEQAAILVNNLETRGANVQVFRGDATVKEDVEEAVRSIPADRPLRGVVHAAMVLRDGLFQNMAYENWTTSIRPKVLGSKHLTEVVADLNLDFFLMMSSVSGILGTPGQANYAAGNSYMDALARLRRSQGKPACAVVLPMILGVGVVAQNDGLEDSLKRKGMYGIDEEALLDSFEAAIIEQRPQTCQQNEALDHLIVGLDPAGLHKARQEAEGDVDAFWSADPRFSSLVHSMNVYGGGNQGGDGEAGSILTRLRAAGTESPAKAVDLVRDHFIAKLARILLVDEAEFGGDDNAERSIASYGVDSMIGAELRNWIFKDLGLDIAFQQLLSPSLTISKFSELVCGAQGIVVEQKV.

One can recognise a Ketosynthase family 3 (KS3) domain in the interval 47-477; that stretch reads LEPIAVVGMG…GTNAHTIIES (431 aa). Active-site for beta-ketoacyl synthase activity residues include C221, H358, and H399. The segment at 593-906 is malonyl-CoA:ACP transacylase (MAT) domain; that stretch reads VFTGQGAQWA…QYLPTLVRGF (314 aa). S685 (for malonyltransferase activity) is an active-site residue. The segment at 983 to 1121 is N-terminal hotdog fold; the sequence is HDVLGQLTTG…GSIAIRTSAR (139 aa). Residues 983–1158 are dehydratase (DH) domain; sequence HDVLGQLTTG…FNYGPTFQDM (176 aa). The 304-residue stretch at 983–1286 folds into the PKS/mFAS DH domain; the sequence is HDVLGQLTTG…CIAYEAAIPQ (304 aa). Residue H1015 is the Proton acceptor; for dehydratase activity of the active site. Residues 1131 to 1286 are C-terminal hotdog fold; it reads LPQRASGRLW…CIAYEAAIPQ (156 aa). D1195 functions as the Proton donor; for dehydratase activity in the catalytic mechanism. The interval 1659–1964 is enoyl reductase (ER) domain; it reads GRIQAGKVVF…DSICDNKIVI (306 aa). The ketoreductase (KR) domain stretch occupies residues 1988–2163; the sequence is ATYLLVGCLG…KPACAVVLPM (176 aa). One can recognise a Carrier domain in the interval 2289 to 2368; the sequence is DLVRDHFIAK…KFSELVCGAQ (80 aa). An O-(pantetheine 4'-phosphoryl)serine modification is found at S2327.

The protein operates within polyketide biosynthesis. Reducing polyketide synthase; part of the gene cluster that mediates the biosynthesis of depudecin, a highly oxidized eleven-carbon linear polyketide that acts as a histone deacetylase (HDAC) inhibitor and makes a small contribution to pathogenesis. The reducing polyketide synthase DEP5 is the central enzyme in depudecin biosynthesis by yielding the backbone polyketide chain. The monooxygenases DEP2 and DEP4, as well as the uncharacterized protein DEP1, then act as tailoring enzymes to modify the intermediate polyketide chain into depudecin. The sequence is that of Reducing polyketide synthase DEP5 from Alternaria brassicicola (Dark leaf spot agent).